The primary structure comprises 541 residues: Arginine--tRNA ligase (541 aa).

Residues 119 to 129 (ANPTGPLHIGH) carry the 'HIGH' region motif.

Belongs to the class-I aminoacyl-tRNA synthetase family. In terms of assembly, monomer.

Its subcellular location is the cytoplasm. It catalyses the reaction tRNA(Arg) + L-arginine + ATP = L-arginyl-tRNA(Arg) + AMP + diphosphate. This Helicobacter acinonychis (strain Sheeba) protein is Arginine--tRNA ligase.